The chain runs to 600 residues: ATP-dependent lipid A-core flippase (600 aa).

6 helical membrane passes run 28 to 48 (TLSILGLIVYGLVDAAFIAFI), 80 to 100 (VMLMAPLVVIGMFTLRGVANF), 159 to 179 (ALISIVRDSITVIGMLALMFF), 182 to 202 (WKLSLCILVIGPLMGVVISIV), 267 to 287 (VSQPVIMIIGSFALAFVLYAA), and 295 to 315 (ELTAGTFAAILGAMLAMLQPI). The ABC transmembrane type-1 domain occupies 29 to 327 (LSILGLIVYG…LTRVNAEFQR (299 aa)). In terms of domain architecture, ABC transporter spans 359–596 (LRFDNVSFSY…KGAYAGLYQM (238 aa)). Residue 393–400 (GRSGSGKS) participates in ATP binding.

The protein belongs to the ABC transporter superfamily. Lipid exporter (TC 3.A.1.106) family. In terms of assembly, homodimer.

Its subcellular location is the cell inner membrane. It carries out the reaction ATP + H2O + lipid A-core oligosaccharideSide 1 = ADP + phosphate + lipid A-core oligosaccharideSide 2.. Involved in lipopolysaccharide (LPS) biosynthesis. Translocates lipid A-core from the inner to the outer leaflet of the inner membrane. Transmembrane domains (TMD) form a pore in the inner membrane and the ATP-binding domain (NBD) is responsible for energy generation. The protein is ATP-dependent lipid A-core flippase of Shewanella denitrificans (strain OS217 / ATCC BAA-1090 / DSM 15013).